The following is a 388-amino-acid chain: Chaperone protein DnaJ (388 aa).

Positions 4-69 (DYYDILGVDE…EKRQRYDQFG (66 aa)) constitute a J domain. 3 stretches are compositionally biased toward basic and acidic residues: residues 27–50 (KAME…KEAS), 58–73 (DPEK…HDGV), and 113–124 (GRSERGRGRPGS). Disordered stretches follow at residues 27 to 86 (KAME…GRGR) and 99 to 125 (SDIF…PGSD). The segment at 140–225 (GTEKNLRLQK…CGGEGRVQGE (86 aa)) adopts a CR-type zinc-finger fold. Zn(2+)-binding residues include cysteine 153, cysteine 156, cysteine 173, cysteine 176, cysteine 199, cysteine 202, cysteine 213, and cysteine 216. 4 CXXCXGXG motif repeats span residues 153-160 (CESCDGTG), 173-180 (CPKCDGTG), 199-206 (CPRCEGEG), and 213-220 (CDDCGGEG). Positions 362-376 (AHDNFQPRPPEEDTQ) are enriched in basic and acidic residues. The interval 362-388 (AHDNFQPRPPEEDTQKSFFRRVSDVFS) is disordered.

The protein belongs to the DnaJ family. In terms of assembly, homodimer. Zn(2+) is required as a cofactor.

The protein resides in the cytoplasm. Functionally, participates actively in the response to hyperosmotic and heat shock by preventing the aggregation of stress-denatured proteins and by disaggregating proteins, also in an autonomous, DnaK-independent fashion. Unfolded proteins bind initially to DnaJ; upon interaction with the DnaJ-bound protein, DnaK hydrolyzes its bound ATP, resulting in the formation of a stable complex. GrpE releases ADP from DnaK; ATP binding to DnaK triggers the release of the substrate protein, thus completing the reaction cycle. Several rounds of ATP-dependent interactions between DnaJ, DnaK and GrpE are required for fully efficient folding. Also involved, together with DnaK and GrpE, in the DNA replication of plasmids through activation of initiation proteins. This chain is Chaperone protein DnaJ, found in Salinibacter ruber (strain DSM 13855 / M31).